Here is a 128-residue protein sequence, read N- to C-terminus: Holo-[acyl-carrier-protein] synthase (128 aa).

Mg(2+) contacts are provided by Asp8 and Glu59.

It belongs to the P-Pant transferase superfamily. AcpS family. The cofactor is Mg(2+).

It localises to the cytoplasm. The catalysed reaction is apo-[ACP] + CoA = holo-[ACP] + adenosine 3',5'-bisphosphate + H(+). Transfers the 4'-phosphopantetheine moiety from coenzyme A to a Ser of acyl-carrier-protein. This is Holo-[acyl-carrier-protein] synthase from Rickettsia typhi (strain ATCC VR-144 / Wilmington).